The chain runs to 984 residues: uncharacterized protein (984 aa).

Residues Phe941 to Tyr984 are disordered.

The protein resides in the virion. This is an uncharacterized protein from Acanthamoeba polyphaga (Amoeba).